We begin with the raw amino-acid sequence, 419 residues long: Gamma-glutamyl phosphate reductase (419 aa).

This sequence belongs to the gamma-glutamyl phosphate reductase family.

Its subcellular location is the cytoplasm. It catalyses the reaction L-glutamate 5-semialdehyde + phosphate + NADP(+) = L-glutamyl 5-phosphate + NADPH + H(+). The protein operates within amino-acid biosynthesis; L-proline biosynthesis; L-glutamate 5-semialdehyde from L-glutamate: step 2/2. Its function is as follows. Catalyzes the NADPH-dependent reduction of L-glutamate 5-phosphate into L-glutamate 5-semialdehyde and phosphate. The product spontaneously undergoes cyclization to form 1-pyrroline-5-carboxylate. The sequence is that of Gamma-glutamyl phosphate reductase from Yersinia pseudotuberculosis serotype O:1b (strain IP 31758).